A 380-amino-acid chain; its full sequence is MRIGIVAGELSGDQLGATLVEALKKKYPNAEIEGIGGPKMEAQGFKSLYPMDALSLIGFLEILSKGLSILNIRRKIIKYFKHNKPDIFIGIDAPDFNLTVEKKLRASGIKTIHYVSPKIWVWREYRIKKIRKATDKILAILPFEVEYYKNRHNFEAIYVGHPLAKNISLEIDRSKYKKRLGLENVELPILSVLPGSRTTEVTRLLPLFLDAIEKLQESGYKFKAIMPLAKPSLKPIFDQYNSQIRSLGIEVLETNSHDVLKASDLSLLASGTATLEAMLCKLPMVVGYKLSKLSAFIGRILIRGHSYWAFPNILHKSEIIKELIQEDCTVDNLFYELKRLFDDKQRNNYIVQEFKKIHEHMVVDTEEKIIEVLDSIIEKS.

This sequence belongs to the LpxB family.

It carries out the reaction a lipid X + a UDP-2-N,3-O-bis[(3R)-3-hydroxyacyl]-alpha-D-glucosamine = a lipid A disaccharide + UDP + H(+). It functions in the pathway bacterial outer membrane biogenesis; LPS lipid A biosynthesis. In terms of biological role, condensation of UDP-2,3-diacylglucosamine and 2,3-diacylglucosamine-1-phosphate to form lipid A disaccharide, a precursor of lipid A, a phosphorylated glycolipid that anchors the lipopolysaccharide to the outer membrane of the cell. The protein is Lipid-A-disaccharide synthase of Francisella philomiragia subsp. philomiragia (strain ATCC 25017 / CCUG 19701 / FSC 153 / O#319-036).